The following is a 464-amino-acid chain: Cysteine--tRNA ligase (464 aa).

Residue C29 coordinates Zn(2+). Positions 31-41 match the 'HIGH' region motif; the sequence is ATVQGVPHIGH. The interval 160-180 is disordered; that stretch reads RLDEVQQGESTASGKRDPRDF. C208, H233, and E237 together coordinate Zn(2+). The 'KMSKS' region signature appears at 264 to 268; sequence KMSKS. K267 serves as a coordination point for ATP.

The protein belongs to the class-I aminoacyl-tRNA synthetase family. Monomer. Zn(2+) is required as a cofactor.

The protein resides in the cytoplasm. It catalyses the reaction tRNA(Cys) + L-cysteine + ATP = L-cysteinyl-tRNA(Cys) + AMP + diphosphate. This Saccharopolyspora erythraea (strain ATCC 11635 / DSM 40517 / JCM 4748 / NBRC 13426 / NCIMB 8594 / NRRL 2338) protein is Cysteine--tRNA ligase.